Reading from the N-terminus, the 726-residue chain is Penicillin-binding protein 1A (726 aa).

Residues 1-3 (MKK) are Cytoplasmic-facing. A helical; Signal-anchor for type II membrane protein membrane pass occupies residues 4–24 (LVIGILGIVIALFVGLLVFLI). The Periplasmic portion of the chain corresponds to 25 to 726 (PIYKNLPDPK…SDLNAILGLR (702 aa)). Positions 45–213 (SEVYDAKGRL…AKYNPFYHPE (169 aa)) are transglycosylase. Glu83 (proton donor; for transglycosylase activity) is an active-site residue. Positions 379-662 (KYLGGNRAEI…SRVALPIWID (284 aa)) are transpeptidase. Catalysis depends on Ser432, which acts as the Acyl-ester intermediate; for transpeptidase activity.

This sequence in the N-terminal section; belongs to the glycosyltransferase 51 family. It in the C-terminal section; belongs to the transpeptidase family.

It localises to the cell inner membrane. It catalyses the reaction [GlcNAc-(1-&gt;4)-Mur2Ac(oyl-L-Ala-gamma-D-Glu-L-Lys-D-Ala-D-Ala)](n)-di-trans,octa-cis-undecaprenyl diphosphate + beta-D-GlcNAc-(1-&gt;4)-Mur2Ac(oyl-L-Ala-gamma-D-Glu-L-Lys-D-Ala-D-Ala)-di-trans,octa-cis-undecaprenyl diphosphate = [GlcNAc-(1-&gt;4)-Mur2Ac(oyl-L-Ala-gamma-D-Glu-L-Lys-D-Ala-D-Ala)](n+1)-di-trans,octa-cis-undecaprenyl diphosphate + di-trans,octa-cis-undecaprenyl diphosphate + H(+). The catalysed reaction is Preferential cleavage: (Ac)2-L-Lys-D-Ala-|-D-Ala. Also transpeptidation of peptidyl-alanyl moieties that are N-acyl substituents of D-alanine.. It participates in cell wall biogenesis; peptidoglycan biosynthesis. The sequence is that of Penicillin-binding protein 1A (mrcA) from Aquifex aeolicus (strain VF5).